The following is a 579-amino-acid chain: Effector protein HopAB3 (579 aa).

3 disordered regions span residues 1-140 (MAGI…TGAV), 214-294 (VRQQ…NQVP), and 384-408 (PARA…PDSA). Residues 1–336 (MAGINGAGPS…LRAALERHIL (336 aa)) form a host recognition; Pto interaction region. Low complexity-rich tracts occupy residues 23–39 (ASGG…SSNS), 89–101 (RPQE…APQA), 219–248 (ASAP…ESSS), 266–281 (NQRR…ASQR), and 384–402 (PARA…ATVS). The segment at 337–579 (HRRPIPMDIA…IAKYAFRIVP (243 aa)) is E3 ubiquitin-protein ligase.

Belongs to the HopAB family. As to quaternary structure, interacts physically with plant cell Pto. Post-translationally, auto-ubiquitinated.

It localises to the secreted. Its function is as follows. Effector protein involved in gene-for-gene resistance in tomato plants. It is recognized by the host Pto resistance protein and elicits Pto and Prf-dependent hypersensitive response (HR) and programmed cell death (PCD), resulting in host immunity. In susceptible plants, acts as a virulence factor by suppressing PCD and HR-based plant immunity. This function requires its E3 ubiquitin ligase activity probably by recruiting E2 enzymes and transferring ubiquitin molecules to cellular proteins involved in regulation of PCD and targeting them for degradation. Enhances the development of disease symptoms and bacterial growth. The protein is Effector protein HopAB3 (hopAB3) of Pseudomonas syringae pv. tomato.